The chain runs to 179 residues: ATP synthase subunit b (179 aa).

Residues 13 to 33 (IHIDELVFGLIAFAVIFALVY) form a helical membrane-spanning segment.

This sequence belongs to the ATPase B chain family. As to quaternary structure, F-type ATPases have 2 components, F(1) - the catalytic core - and F(0) - the membrane proton channel. F(1) has five subunits: alpha(3), beta(3), gamma(1), delta(1), epsilon(1). F(0) has three main subunits: a(1), b(2) and c(10-14). The alpha and beta chains form an alternating ring which encloses part of the gamma chain. F(1) is attached to F(0) by a central stalk formed by the gamma and epsilon chains, while a peripheral stalk is formed by the delta and b chains.

The protein localises to the cell membrane. In terms of biological role, f(1)F(0) ATP synthase produces ATP from ADP in the presence of a proton or sodium gradient. F-type ATPases consist of two structural domains, F(1) containing the extramembraneous catalytic core and F(0) containing the membrane proton channel, linked together by a central stalk and a peripheral stalk. During catalysis, ATP synthesis in the catalytic domain of F(1) is coupled via a rotary mechanism of the central stalk subunits to proton translocation. Component of the F(0) channel, it forms part of the peripheral stalk, linking F(1) to F(0). This Thermobifida fusca (strain YX) protein is ATP synthase subunit b.